The primary structure comprises 235 residues: Ubiquitin-like-conjugating enzyme ATG10 (235 aa).

The active-site Glycyl thioester intermediate is the Cys-196.

It belongs to the ATG10 family. In terms of assembly, forms homooligomers. Interacts with ATG7 and ATG12.

The protein resides in the preautophagosomal structure membrane. In terms of biological role, E2-like enzyme required for the cytoplasm to vacuole transport (Cvt), autophagy and nucleophagy. Acts as an E2-like enzyme that catalyzes the conjugation of ATG12 to ATG5. ATG12 conjugation to ATG5 is required for proper localization of ATG8 to the preautophagosomal structure (PAS). Likely serves as an ATG5-recognition molecule. Autophagy is required for proper vegetative growth, asexual/sexual reproduction, and full virulence. Autophagy is particularly involved in the biosynthesis of deoxynivalenol (DON), an important virulence determinant. This Gibberella zeae (strain ATCC MYA-4620 / CBS 123657 / FGSC 9075 / NRRL 31084 / PH-1) (Wheat head blight fungus) protein is Ubiquitin-like-conjugating enzyme ATG10.